The chain runs to 399 residues: Tyrosine--tRNA ligase 2 (399 aa).

The short motif at 41-50 (PTAPDLHLGH) is the 'HIGH' region element. Residues 225–229 (KMSKS) carry the 'KMSKS' region motif. K228 is an ATP binding site. In terms of domain architecture, S4 RNA-binding spans 336-398 (ILIANLLKEA…GKRKFANITV (63 aa)).

This sequence belongs to the class-I aminoacyl-tRNA synthetase family. TyrS type 2 subfamily. In terms of assembly, homodimer.

Its subcellular location is the cytoplasm. It catalyses the reaction tRNA(Tyr) + L-tyrosine + ATP = L-tyrosyl-tRNA(Tyr) + AMP + diphosphate + H(+). In terms of biological role, catalyzes the attachment of tyrosine to tRNA(Tyr) in a two-step reaction: tyrosine is first activated by ATP to form Tyr-AMP and then transferred to the acceptor end of tRNA(Tyr). In Pseudoalteromonas translucida (strain TAC 125), this protein is Tyrosine--tRNA ligase 2.